The sequence spans 122 residues: Large ribosomal subunit protein uL14 (122 aa).

Belongs to the universal ribosomal protein uL14 family. As to quaternary structure, part of the 50S ribosomal subunit. Forms a cluster with proteins L3 and L19. In the 70S ribosome, L14 and L19 interact and together make contacts with the 16S rRNA in bridges B5 and B8.

Binds to 23S rRNA. Forms part of two intersubunit bridges in the 70S ribosome. This chain is Large ribosomal subunit protein uL14, found in Campylobacter fetus subsp. fetus (strain 82-40).